The following is a 105-amino-acid chain: Vacuolar ATPase assembly integral membrane protein VMA21 homolog (105 aa).

The segment at 1–26 is disordered; that stretch reads MSTKNKKAAGGNGGAPKQTRQQSHDS. The Cytoplasmic segment spans residues 1-36; sequence MSTKNKKAAGGNGGAPKQTRQQSHDSQDYSSFKTVL. Residues 37–57 form a helical membrane-spanning segment; sequence FYCMLIVFLPVLTFFVLKGFV. Residues 58-68 are Lumenal-facing; that stretch reads LDQFLDISEVK. Residues 69–89 traverse the membrane as a helical segment; that stretch reads VNIASAVGAVVALHVALGLYI. The Cytoplasmic segment spans residues 90–105; sequence YRAYFGAPGSKASKTD.

This sequence belongs to the VMA21 family.

The protein resides in the endoplasmic reticulum membrane. The protein localises to the endoplasmic reticulum-Golgi intermediate compartment membrane. It localises to the cytoplasmic vesicle. Its subcellular location is the COPII-coated vesicle membrane. Functionally, required for the assembly of the V0 complex of the vacuolar ATPase (V-ATPase) in the endoplasmic reticulum. This Drosophila yakuba (Fruit fly) protein is Vacuolar ATPase assembly integral membrane protein VMA21 homolog.